We begin with the raw amino-acid sequence, 268 residues long: MERYQQLFKQLAAKKEGAFVPFVQLGDPSPAMSLNIIDTLIAAGADALELGIPFSDPLADGPTIQNAALRAFAAGVTPAICFEILAEIRQKHPTIPIGLLMYANLVFHNGIDHFYQRCAEVGVDSVLIADVPFEESAPFRAAALRHGIAPIFICPPNADGDLLREIASHGRGYTYLLSRAGVTGAENHGQLPLNHLVDKLREYNAAPALQGFGISEPAQVKASLAAGAAGAISGSAIVKIIEKNVAQPVEMLVQLTRFVTEMKAATRS.

Residues Glu-49 and Asp-60 each act as proton acceptor in the active site.

The protein belongs to the TrpA family. As to quaternary structure, tetramer of two alpha and two beta chains.

It catalyses the reaction (1S,2R)-1-C-(indol-3-yl)glycerol 3-phosphate + L-serine = D-glyceraldehyde 3-phosphate + L-tryptophan + H2O. It functions in the pathway amino-acid biosynthesis; L-tryptophan biosynthesis; L-tryptophan from chorismate: step 5/5. The alpha subunit is responsible for the aldol cleavage of indoleglycerol phosphate to indole and glyceraldehyde 3-phosphate. In Yersinia pseudotuberculosis serotype O:3 (strain YPIII), this protein is Tryptophan synthase alpha chain.